A 188-amino-acid chain; its full sequence is Cytidylate kinase (188 aa).

Gly-7–Thr-15 lines the ATP pocket.

It belongs to the cytidylate kinase family. Type 2 subfamily.

It localises to the cytoplasm. It carries out the reaction CMP + ATP = CDP + ADP. The enzyme catalyses dCMP + ATP = dCDP + ADP. This Thermoplasma acidophilum (strain ATCC 25905 / DSM 1728 / JCM 9062 / NBRC 15155 / AMRC-C165) protein is Cytidylate kinase (cmk).